We begin with the raw amino-acid sequence, 208 residues long: MSKKNSDTKQLEILRYIYDTVDHRGFPPTVREICAAVKLSSTSTVHGHLARLERKGLLIKDATKPRALEITDEGKKELGIKPKRIPVIGVVAAGHPILAVQDIDEYFPLPPDLENDAGELFMLKIHGESMINAGILNGDNVIVKKQNTANNGEIVVAMTDENEATVKRFYKEKDHYRLQPENDTMAPIILPEVTILGKVVGLYRNNID.

Positions 30 to 50 (VREICAAVKLSSTSTVHGHLA) form a DNA-binding region, H-T-H motif. Catalysis depends on for autocatalytic cleavage activity residues serine 129 and lysine 167.

This sequence belongs to the peptidase S24 family. In terms of assembly, homodimer.

It catalyses the reaction Hydrolysis of Ala-|-Gly bond in repressor LexA.. Functionally, represses a number of genes involved in the response to DNA damage (SOS response), including recA and lexA. In the presence of single-stranded DNA, RecA interacts with LexA causing an autocatalytic cleavage which disrupts the DNA-binding part of LexA, leading to derepression of the SOS regulon and eventually DNA repair. This chain is LexA repressor, found in Lactobacillus helveticus (strain DPC 4571).